We begin with the raw amino-acid sequence, 160 residues long: Cytochrome b6-f complex subunit 4 (160 aa).

Helical transmembrane passes span L36 to V56, L95 to E115, and T131 to I151.

The protein belongs to the cytochrome b family. PetD subfamily. As to quaternary structure, the 4 large subunits of the cytochrome b6-f complex are cytochrome b6, subunit IV (17 kDa polypeptide, petD), cytochrome f and the Rieske protein, while the 4 small subunits are petG, petL, petM and petN. The complex functions as a dimer.

The protein localises to the plastid. Its subcellular location is the chloroplast thylakoid membrane. Functionally, component of the cytochrome b6-f complex, which mediates electron transfer between photosystem II (PSII) and photosystem I (PSI), cyclic electron flow around PSI, and state transitions. The protein is Cytochrome b6-f complex subunit 4 of Solanum bulbocastanum (Wild potato).